A 551-amino-acid chain; its full sequence is Peptidyl-prolyl cis-trans isomerase-like 4 (551 aa).

Residues 1 to 185 enclose the PPIase cyclophilin-type domain; that stretch reads MSVLLETSLG…RDIRIRHVVV (185 aa). Residues 54–88 are disordered; that stretch reads GDPSNTGKGGASIWSQLPSTSQDSSTSTYFTPESS. A compositionally biased stretch (polar residues) spans 66–88; the sequence is IWSQLPSTSQDSSTSTYFTPESS. The region spanning 262 to 340 is the RRM domain; it reads NILFVCKLNP…RRIWVDFSQS (79 aa). Positions 352 to 551 are disordered; that stretch reads RNAGSDAPRA…RQRSRDGSRR (200 aa). Composition is skewed to basic and acidic residues over residues 384 to 397 and 408 to 454; these read KRGD…RDQP and SRQD…SHRD. The segment covering 455-464 has biased composition (basic residues); the sequence is HERHHLSRHV. Residues 465–551 are compositionally biased toward basic and acidic residues; it reads RPSDEGESKC…RQRSRDGSRR (87 aa).

This sequence belongs to the cyclophilin-type PPIase family. PPIL4 subfamily.

The protein localises to the nucleus. The enzyme catalyses [protein]-peptidylproline (omega=180) = [protein]-peptidylproline (omega=0). PPIases accelerate the folding of proteins. It catalyzes the cis-trans isomerization of proline imidic peptide bonds in oligopeptides. The sequence is that of Peptidyl-prolyl cis-trans isomerase-like 4 (CYP6) from Mycosarcoma maydis (Corn smut fungus).